We begin with the raw amino-acid sequence, 124 residues long: Acidic phospholipase A2 (124 aa).

7 disulfide bridges follow: C26–C116, C28–C44, C43–C95, C49–C124, C50–C88, C57–C81, and C75–C86. Residues Y27, G29, and G31 each contribute to the Ca(2+) site. The active site involves H47. Residue D48 coordinates Ca(2+). D89 is an active-site residue.

The protein belongs to the phospholipase A2 family. Group II subfamily. D49 sub-subfamily. It depends on Ca(2+) as a cofactor. As to expression, expressed by the venom gland.

It is found in the secreted. The enzyme catalyses a 1,2-diacyl-sn-glycero-3-phosphocholine + H2O = a 1-acyl-sn-glycero-3-phosphocholine + a fatty acid + H(+). Functionally, snake venom phospholipase A2 (PLA2) that inhibits ADP-induced platelet aggregation. PLA2 catalyzes the calcium-dependent hydrolysis of the 2-acyl groups in 3-sn-phosphoglycerides. The sequence is that of Acidic phospholipase A2 from Gloydius ussuriensis (Ussuri mamushi).